Here is a 528-residue protein sequence, read N- to C-terminus: Endoglucanase 24 (528 aa).

An N-terminal signal peptide occupies residues 1 to 24 (MGSKTKGCCGWLIVALVASLVATA). Residue D109 is the Nucleophile of the active site. N-linked (GlcNAc...) asparagine glycosylation is present at N259. Residue H446 is part of the active site. N487 carries N-linked (GlcNAc...) asparagine glycosylation. Residues D492 and E501 contribute to the active site.

This sequence belongs to the glycosyl hydrolase 9 (cellulase E) family.

The protein localises to the secreted. It catalyses the reaction Endohydrolysis of (1-&gt;4)-beta-D-glucosidic linkages in cellulose, lichenin and cereal beta-D-glucans.. This Oryza sativa subsp. japonica (Rice) protein is Endoglucanase 24.